The primary structure comprises 359 residues: Replication-associated protein (359 aa).

Residues 8–116 (QINAKHYFLT…DGDVLEWGTF (109 aa)) enclose the CRESS-DNA virus Rep endonuclease domain. Residues 15 to 18 (FLTF) carry the RCR-1 motif. Residues glutamate 49, histidine 57, and histidine 59 each coordinate a divalent metal cation. Residues 57–59 (HLH) carry the RCR-2 motif. The For DNA cleavage activity role is filled by tyrosine 103. The short motif at 103 to 106 (YIDK) is the RCR-3 element. Aspartate 107 contributes to the a divalent metal cation binding site. Residues 143-153 (KSEALDVIKEL) are binding to RBR1. The segment at 156–176 (RDYILHFHNINSNLNMVFQVP) is oligomerization. 221 to 228 (GDSRTGKT) provides a ligand contact to ATP.

The protein belongs to the geminiviridae Rep protein family. In terms of assembly, homooligomer. Interacts with the replication enhancer protein (REn). Interacts with host retinoblastoma-related protein 1 (RBR1), and may thereby induce the transcription of host replicative enzymes even if the cell is not dividing anymore. Interacts with host PCNA. Interacts with host SCE1 protein. Mg(2+) is required as a cofactor. Requires Mn(2+) as cofactor.

The protein resides in the host nucleus. In terms of biological role, essential for the replication of viral ssDNA. The closed circular ssDNA genome is first converted to a superhelical dsDNA. Rep binds a specific region at the genome origin of replication. It introduces an endonucleolytic nick within the conserved sequence 5'-TAATATTAC-3' in the intergenic region of the genome present in all geminiviruses, thereby initiating the rolling circle replication (RCR). Following cleavage, binds covalently to the 5'-phosphate of DNA as a tyrosyl ester. The cleavage gives rise to a free 3'-OH that serves as a primer for the cellular DNA polymerase. The polymerase synthesizes the (+) strand DNA by rolling circle mechanism. After one round of replication, a Rep-catalyzed nucleotidyl transfer reaction releases a circular single-stranded virus genome, thereby terminating the replication. Displays origin-specific DNA cleavage, nucleotidyl transferase, ATPase and helicase activities. The protein is Replication-associated protein of Solanum lycopersicum (Tomato).